An 806-amino-acid chain; its full sequence is Disintegrin and metalloproteinase domain-containing protein 1b (806 aa).

Positions 1-33 (MERLKLGKIPEHWCIRLVAMLLLAIIFLPSTFC) are cleaved as a signal peptide. A disordered region spans residues 169-188 (CSVTPKDSPGDTSHPPRSRK). One can recognise a Peptidase M12B domain in the interval 203–397 (KYVEMFVVVN…HRGVCLLDEP (195 aa)). Residue Asn224 is glycosylated (N-linked (GlcNAc...) asparagine). 7 cysteine pairs are disulfide-bonded: Cys313-Cys392, Cys353-Cys376, Cys355-Cys361, Cys462-Cys482, Cys635-Cys647, Cys641-Cys653, and Cys655-Cys664. A Zn(2+)-binding site is contributed by His338. Glu339 is a catalytic residue. The Zn(2+) site is built by His342 and His348. N-linked (GlcNAc...) asparagine glycans are attached at residues Asn375 and Asn476. Residues 406 to 490 (AANCGNGVVE…ACPSDRKAQD (85 aa)) enclose the Disintegrin domain. The EGF-like domain maps to 631–665 (FSFPCSPSKQCNKHGVCNDLGNCHCSFGFAPPDCK). The disordered stretch occupies residues 668 to 694 (GTGGSVDSGPAVNLSNDSSPGPNSTQS). Residues Asn680, Asn683, and Asn690 are each glycosylated (N-linked (GlcNAc...) asparagine). Residues 680–694 (NLSNDSSPGPNSTQS) show a composition bias toward polar residues. Residues 705–725 (LIVLAVILVLMILLIIICIIS) traverse the membrane as a helical segment. Topologically, residues 726–806 (AYTKSETASE…KDEDEEEGEE (81 aa)) are cytoplasmic. The interval 735 to 806 (EAGPSELEEL…KDEDEEEGEE (72 aa)) is disordered. A compositionally biased stretch (acidic residues) spans 740–806 (ELEELPEGEK…KDEDEEEGEE (67 aa)).

As to quaternary structure, heterodimer with ADAM2/fertilin subunit beta. As to expression, testis.

The protein localises to the membrane. May play a role in spermatogenesis and sperm maturation. This is Disintegrin and metalloproteinase domain-containing protein 1b (Adam1b) from Mus musculus (Mouse).